The chain runs to 258 residues: Acyl-[acyl-carrier-protein]--UDP-N-acetylglucosamine O-acyltransferase (258 aa).

The protein belongs to the transferase hexapeptide repeat family. LpxA subfamily. In terms of assembly, homotrimer.

The protein localises to the cytoplasm. The enzyme catalyses a (3R)-hydroxyacyl-[ACP] + UDP-N-acetyl-alpha-D-glucosamine = a UDP-3-O-[(3R)-3-hydroxyacyl]-N-acetyl-alpha-D-glucosamine + holo-[ACP]. Its pathway is glycolipid biosynthesis; lipid IV(A) biosynthesis; lipid IV(A) from (3R)-3-hydroxytetradecanoyl-[acyl-carrier-protein] and UDP-N-acetyl-alpha-D-glucosamine: step 1/6. Involved in the biosynthesis of lipid A, a phosphorylated glycolipid that anchors the lipopolysaccharide to the outer membrane of the cell. The protein is Acyl-[acyl-carrier-protein]--UDP-N-acetylglucosamine O-acyltransferase of Thiobacillus denitrificans (strain ATCC 25259 / T1).